Here is a 329-residue protein sequence, read N- to C-terminus: Isopentenyl-diphosphate delta-isomerase (329 aa).

4–5 (RK) contacts substrate. FMN contacts are provided by residues 59 to 61 (AMT), Ser89, and Asn116. Residue Gln146 coordinates substrate. A Mg(2+)-binding site is contributed by Glu147. FMN-binding positions include Lys178, Ser203, Thr208, 252–254 (GVR), and 273–274 (SR).

Belongs to the IPP isomerase type 2 family. In terms of assembly, homooctamer. Dimer of tetramers. Requires FMN as cofactor. NADPH serves as cofactor. Mg(2+) is required as a cofactor.

It localises to the cytoplasm. The enzyme catalyses isopentenyl diphosphate = dimethylallyl diphosphate. Functionally, involved in the biosynthesis of isoprenoids. Catalyzes the 1,3-allylic rearrangement of the homoallylic substrate isopentenyl (IPP) to its allylic isomer, dimethylallyl diphosphate (DMAPP). The chain is Isopentenyl-diphosphate delta-isomerase from Streptococcus pyogenes serotype M28 (strain MGAS6180).